We begin with the raw amino-acid sequence, 468 residues long: Glutamate--tRNA ligase (468 aa).

The short motif at 8–18 (PSPTGFLHVGG) is the 'HIGH' region element. Residues Cys-97, Cys-99, Cys-124, and Asp-126 each contribute to the Zn(2+) site. The short motif at 236–240 (KLSKR) is the 'KMSKS' region element. Residue Lys-239 coordinates ATP.

It belongs to the class-I aminoacyl-tRNA synthetase family. Glutamate--tRNA ligase type 1 subfamily. As to quaternary structure, monomer. The cofactor is Zn(2+).

It is found in the cytoplasm. It carries out the reaction tRNA(Glu) + L-glutamate + ATP = L-glutamyl-tRNA(Glu) + AMP + diphosphate. Functionally, catalyzes the attachment of glutamate to tRNA(Glu) in a two-step reaction: glutamate is first activated by ATP to form Glu-AMP and then transferred to the acceptor end of tRNA(Glu). The protein is Glutamate--tRNA ligase of Francisella tularensis subsp. holarctica (strain FTNF002-00 / FTA).